The primary structure comprises 291 residues: Kidney mitochondrial carrier protein 1 (291 aa).

The residue at position 2 (serine 2) is an N-acetylserine. Solcar repeat units lie at residues 7-96 (KPFV…LKRL), 104-189 (ETLL…TKKH), and 198-289 (DTVS…LKKL). The next 6 helical transmembrane spans lie at 9–26 (FVYG…TFPI), 71–89 (GIAP…KIGT), 106–124 (LLIN…SAIA), 164–183 (GVSL…LPVY), 204–224 (FLSS…VDVV), and 264–283 (GFWP…FLTY).

The protein belongs to the mitochondrial carrier (TC 2.A.29) family. In terms of assembly, interacts with VDAC1.

Its subcellular location is the mitochondrion inner membrane. The catalysed reaction is sulfite(in) + sulfate(out) = sulfite(out) + sulfate(in). The enzyme catalyses thiosulfate(in) + sulfate(out) = thiosulfate(out) + sulfate(in). It catalyses the reaction sulfate(out) + phosphate(in) = sulfate(in) + phosphate(out). It carries out the reaction oxalate(in) + sulfate(out) = oxalate(out) + sulfate(in). The catalysed reaction is malonate(in) + sulfate(out) = malonate(out) + sulfate(in). The enzyme catalyses maleate(in) + sulfate(out) = maleate(out) + sulfate(in). It catalyses the reaction (S)-malate(in) + sulfate(out) = (S)-malate(out) + sulfate(in). It carries out the reaction (3S)-citramalate(in) + sulfate(out) = (3S)-citramalate(out) + sulfate(in). The catalysed reaction is (3R)-citramalate(in) + sulfate(out) = (3R)-citramalate(out) + sulfate(in). The enzyme catalyses sulfate(out) + succinate(in) = sulfate(in) + succinate(out). It catalyses the reaction (S,S)-tartrate(in) + sulfate(out) = (S,S)-tartrate(out) + sulfate(in). It carries out the reaction (2R,3R)-tartrate(in) + sulfate(out) = (2R,3R)-tartrate(out) + sulfate(in). The catalysed reaction is D-aspartate(in) + sulfate(out) = D-aspartate(out) + sulfate(in). The enzyme catalyses L-aspartate(in) + sulfate(out) = L-aspartate(out) + sulfate(in). It catalyses the reaction sulfate(in) = sulfate(out). It carries out the reaction phosphate(in) = phosphate(out). The catalysed reaction is (S)-malate(out) = (S)-malate(in). Functionally, antiporter that transports inorganic anions (sulfate, sulfite, thiosulfate and phosphate) and, to a lesser extent, a variety of dicarboxylates (e.g. malonate, malate and citramalate) and, even more so, aspartate. The sulfate/sulfate exchange is much higher than the phosphate/phosphate and malate/malate exchanges. The transport affinities is higher for sulfate and thiosulfate than for any other substrate. May catalyze the export of sulfite and thiosulfate (the hydrogen sulfide degradation products) from the mitochondria, thereby modulating the level of the hydrogen sulfide. Also may mediate a very low unidirectional transport of sulfate, phosphate and (S)-malate. This is Kidney mitochondrial carrier protein 1 from Rattus norvegicus (Rat).